The primary structure comprises 79 residues: UPF0154 protein SSP1415 (79 aa).

The helical transmembrane segment at 4–24 (WLAIVLIVLALILGLVGGFFL) threads the bilayer.

This sequence belongs to the UPF0154 family.

The protein localises to the membrane. The chain is UPF0154 protein SSP1415 from Staphylococcus saprophyticus subsp. saprophyticus (strain ATCC 15305 / DSM 20229 / NCIMB 8711 / NCTC 7292 / S-41).